The primary structure comprises 163 residues: Protein EARLY RESPONSIVE TO DEHYDRATION 15 (163 aa).

The short motif at 10 to 20 is the PAM2-like element; it reads TLNPDAPLFIP. Residues 118 to 163 form a disordered region; it reads NGEMVKKSSGNRSPRSIVEPAKYAEKPAKWGNQRVAAAPRNIHQPR.

In terms of assembly, interacts with PAB2, PAB4 and PAB8. Interacts with MPC. As to expression, expressed in cauline leaves, stems, rosette leaves, immature siliques and primary inflorescences.

The protein resides in the cytoplasm. Functionally, central component of stress responses that interacts with poly(A)-binding proteins. Negative regulator of abscisic acid (ABA) responses, including resistance to drought and freezing as well as stomatal closure regulation. Mediates resistance to the bacterial necrotroph pathogen Erwinia carotovora subsp. carotovora and promotes the induction of marker genes for systemic acquired resistance (SAR). In Arabidopsis thaliana (Mouse-ear cress), this protein is Protein EARLY RESPONSIVE TO DEHYDRATION 15 (ERD15).